Consider the following 248-residue polypeptide: MPRYLKGWLKDVVQLSLRRPSFRASRQRPIISLNERILEFNKRNITAIIAEYKRKSPSGLDVERDPIEYSKFMERYAVGLSILTEEKYFNGSYETLRKIASSVSIPILMKDFIVKESQIDDAYNLGADTVLLIVKILTERELESLLEYARSYGMEPLIEINDENDLDIALRIGARFIGINSRDLETLEINKENQRKLISMIPSNVVKVAESGISERNEIEELRKLGVNAFLIGSSLMRNPEKIKEFIL.

Belongs to the TrpC family. In terms of assembly, monomer.

It carries out the reaction 1-(2-carboxyphenylamino)-1-deoxy-D-ribulose 5-phosphate + H(+) = (1S,2R)-1-C-(indol-3-yl)glycerol 3-phosphate + CO2 + H2O. The protein operates within amino-acid biosynthesis; L-tryptophan biosynthesis; L-tryptophan from chorismate: step 4/5. This Saccharolobus solfataricus (strain ATCC 35092 / DSM 1617 / JCM 11322 / P2) (Sulfolobus solfataricus) protein is Indole-3-glycerol phosphate synthase (trpC).